The following is a 772-amino-acid chain: Mitochondrial intermediate peptidase (772 aa).

Residues methionine 1–leucine 33 constitute a mitochondrion transit peptide. Histidine 556 contributes to the Zn(2+) binding site. Glutamate 557 is a catalytic residue. The Zn(2+) site is built by histidine 560 and histidine 563.

This sequence belongs to the peptidase M3 family. It depends on Zn(2+) as a cofactor.

It localises to the mitochondrion matrix. It carries out the reaction Release of an N-terminal octapeptide as second stage of processing of some proteins imported into the mitochondrion.. Its function is as follows. Cleaves proteins, imported into the mitochondrion, to their mature size. While most mitochondrial precursor proteins are processed to the mature form in one step by mitochondrial processing peptidase (MPP), the sequential cleavage by MIP of an octapeptide after initial processing by MPP is a required step for a subgroup of nuclear-encoded precursor proteins destined for the matrix or the inner membrane. This chain is Mitochondrial intermediate peptidase (OCT1), found in Coprinopsis scobicola (Ink cap fungus).